Reading from the N-terminus, the 183-residue chain is Ribonuclease H (183 aa).

In terms of domain architecture, RNase H type-1 spans 2–151 (SQARFIAFSD…VDQLAQAAAR (150 aa)). Positions 11, 57, 79, and 143 each coordinate Mg(2+).

It belongs to the RNase H family. As to quaternary structure, monomer. Mg(2+) is required as a cofactor.

It is found in the cytoplasm. It catalyses the reaction Endonucleolytic cleavage to 5'-phosphomonoester.. In terms of biological role, endonuclease that specifically degrades the RNA of RNA-DNA hybrids. The chain is Ribonuclease H from Anaeromyxobacter dehalogenans (strain 2CP-1 / ATCC BAA-258).